A 176-amino-acid polypeptide reads, in one-letter code: ATP synthase subunit b (176 aa).

A helical membrane pass occupies residues 7 to 27 (IQIPDGSAIFVLLTFILLMFI). Positions 75-94 (SQSQATALMENARKSSEEQS) are disordered. Residues 85-94 (NARKSSEEQS) are compositionally biased toward basic and acidic residues.

Belongs to the ATPase B chain family. As to quaternary structure, F-type ATPases have 2 components, F(1) - the catalytic core - and F(0) - the membrane proton channel. F(1) has five subunits: alpha(3), beta(3), gamma(1), delta(1), epsilon(1). F(0) has three main subunits: a(1), b(2) and c(10-14). The alpha and beta chains form an alternating ring which encloses part of the gamma chain. F(1) is attached to F(0) by a central stalk formed by the gamma and epsilon chains, while a peripheral stalk is formed by the delta and b chains.

It localises to the cell membrane. In terms of biological role, f(1)F(0) ATP synthase produces ATP from ADP in the presence of a proton or sodium gradient. F-type ATPases consist of two structural domains, F(1) containing the extramembraneous catalytic core and F(0) containing the membrane proton channel, linked together by a central stalk and a peripheral stalk. During catalysis, ATP synthesis in the catalytic domain of F(1) is coupled via a rotary mechanism of the central stalk subunits to proton translocation. Component of the F(0) channel, it forms part of the peripheral stalk, linking F(1) to F(0). In Oenococcus oeni (strain ATCC BAA-331 / PSU-1), this protein is ATP synthase subunit b.